The chain runs to 168 residues: Leukotoxin-activating lysine-acyltransferase LtxC (168 aa).

Residues His23 and Asp92 contribute to the active site.

The protein belongs to the RTX toxin acyltransferase family.

Its subcellular location is the cytoplasm. It catalyses the reaction a fatty acyl-[ACP] + L-lysyl-[protein] = N(6)-(fatty acyl)-L-lysyl-[protein] + holo-[ACP] + H(+). Functionally, required for full activity and modification of the LtxA leukotoxin. Involved in fatty acid modification of the protoxin at two internal lysine residues, thereby converting it to the active toxin. The protein is Leukotoxin-activating lysine-acyltransferase LtxC of Aggregatibacter actinomycetemcomitans (Actinobacillus actinomycetemcomitans).